The following is a 404-amino-acid chain: Cysteine desulfurase IscS (404 aa).

Residues Ala-75–Thr-76, Asn-155, Gln-183, and Ser-203–His-205 contribute to the pyridoxal 5'-phosphate site. The residue at position 206 (Lys-206) is an N6-(pyridoxal phosphate)lysine. Thr-243 is a pyridoxal 5'-phosphate binding site. Residue Cys-328 is the Cysteine persulfide intermediate of the active site. Cys-328 contacts [2Fe-2S] cluster.

The protein belongs to the class-V pyridoxal-phosphate-dependent aminotransferase family. NifS/IscS subfamily. Homodimer. Forms a heterotetramer with IscU, interacts with other sulfur acceptors. It depends on pyridoxal 5'-phosphate as a cofactor.

Its subcellular location is the cytoplasm. The enzyme catalyses (sulfur carrier)-H + L-cysteine = (sulfur carrier)-SH + L-alanine. Its pathway is cofactor biosynthesis; iron-sulfur cluster biosynthesis. In terms of biological role, master enzyme that delivers sulfur to a number of partners involved in Fe-S cluster assembly, tRNA modification or cofactor biosynthesis. Catalyzes the removal of elemental sulfur and selenium atoms from cysteine and selenocysteine to produce alanine. Functions as a sulfur delivery protein for Fe-S cluster synthesis onto IscU, an Fe-S scaffold assembly protein, as well as other S acceptor proteins. Also functions as a selenium delivery protein in the pathway for the biosynthesis of selenophosphate. In Salmonella paratyphi C (strain RKS4594), this protein is Cysteine desulfurase IscS.